Here is a 488-residue protein sequence, read N- to C-terminus: GTPase Der (488 aa).

EngA-type G domains follow at residues 3 to 166 (PVVA…AEAM) and 199 to 372 (IKLA…DSAT). GTP is bound by residues 9 to 16 (GRPNVGKS), 56 to 60 (DTGGI), 118 to 121 (NKVD), 205 to 212 (GKPNVGKS), 252 to 256 (DTAGV), and 317 to 320 (NKWD). Residues 373-457 (RRVSTSMLTR…PIQLRFQEGD (85 aa)) form the KH-like domain. A disordered region spans residues 460-488 (FENKTEKLTMSQERRRKRAQSHIKDRKTK). A compositionally biased stretch (basic residues) spans 473–488 (RRRKRAQSHIKDRKTK).

It belongs to the TRAFAC class TrmE-Era-EngA-EngB-Septin-like GTPase superfamily. EngA (Der) GTPase family. In terms of assembly, associates with the 50S ribosomal subunit.

GTPase that plays an essential role in the late steps of ribosome biogenesis. In Shewanella baltica (strain OS155 / ATCC BAA-1091), this protein is GTPase Der.